Here is a 562-residue protein sequence, read N- to C-terminus: Lamassu protein LmuB (562 aa).

Functionally, component of antiviral defense system Lamassu type I, composed of LmuA and LmuB. Expression of Lamassu type I in B.subtilis (strain BEST7003) confers resistance to phages phi3T, SpBeta and SPR. May be an ATPase. The protein is Lamassu protein LmuB of Bacillus sp. (strain NCIM 5461 / CCTCC AB 2011126 / NIO-1130).